The sequence spans 356 residues: Adenine deaminase (356 aa).

3 residues coordinate Zn(2+): H23, H25, and H211. E214 acts as the Proton donor in catalysis. A Zn(2+)-binding site is contributed by D292. D293 is a binding site for substrate.

It belongs to the metallo-dependent hydrolases superfamily. Adenosine and AMP deaminases family. Adenine deaminase type 2 subfamily. Zn(2+) serves as cofactor.

The protein resides in the cytoplasm. It localises to the nucleus. It catalyses the reaction adenine + H2O + H(+) = hypoxanthine + NH4(+). Its function is as follows. Catalyzes the hydrolytic deamination of adenine to hypoxanthine. Plays an important role in the purine salvage pathway and in nitrogen catabolism. The chain is Adenine deaminase from Candida albicans (strain SC5314 / ATCC MYA-2876) (Yeast).